Consider the following 763-residue polypeptide: Polyribonucleotide nucleotidyltransferase (763 aa).

Positions 526 and 532 each coordinate Mg(2+). The region spanning 592–651 is the KH domain; sequence PRITTIKVPVDKIGEVIGPKGKMINSITEETGAQISIEDDGTVFVGAADGLSAQAAIDKI. An S1 motif domain is found at 663-732; it reads GERFLGTVVK…NRGKISLVLV (70 aa). The segment at 739–763 is disordered; sequence SAESAGDKGAEKAEGAAADVTPAEA. Positions 743–752 are enriched in basic and acidic residues; it reads AGDKGAEKAE.

Belongs to the polyribonucleotide nucleotidyltransferase family. The cofactor is Mg(2+).

It localises to the cytoplasm. It catalyses the reaction RNA(n+1) + phosphate = RNA(n) + a ribonucleoside 5'-diphosphate. Functionally, involved in mRNA degradation. Catalyzes the phosphorolysis of single-stranded polyribonucleotides processively in the 3'- to 5'-direction. This Mycolicibacterium smegmatis (strain ATCC 700084 / mc(2)155) (Mycobacterium smegmatis) protein is Polyribonucleotide nucleotidyltransferase.